The chain runs to 208 residues: dTTP/UTP pyrophosphatase (208 aa).

Asp-78 acts as the Proton acceptor in catalysis.

It belongs to the Maf family. YhdE subfamily. A divalent metal cation is required as a cofactor.

The protein resides in the cytoplasm. The catalysed reaction is dTTP + H2O = dTMP + diphosphate + H(+). The enzyme catalyses UTP + H2O = UMP + diphosphate + H(+). Nucleoside triphosphate pyrophosphatase that hydrolyzes dTTP and UTP. May have a dual role in cell division arrest and in preventing the incorporation of modified nucleotides into cellular nucleic acids. This chain is dTTP/UTP pyrophosphatase, found in Maricaulis maris (strain MCS10) (Caulobacter maris).